The sequence spans 593 residues: Chromodomain Y-like protein (593 aa).

Over residues 1 to 14 (MGIGNSQPNSQEAQ) the composition is skewed to polar residues. The segment at 1–30 (MGIGNSQPNSQEAQLCTLPEKAEQPTDDNT) is disordered. In terms of domain architecture, Chromo spans 56–116 (TQVESIVDKR…RHNERQKEGS (61 aa)). Positions 56-304 (TQVESIVDKR…TIQTSVTGVT (249 aa)) are interaction with EZH2. The residue at position 83 (serine 83) is a Phosphoserine. Positions 110 to 158 (ERQKEGSLARASRASPSNARKQISRSTHSTLSKTNSKALVVGKDHESKS) are disordered. The span at 117 to 129 (LARASRASPSNAR) shows a compositional bias: low complexity. Residue lysine 130 is modified to N6,N6,N6-trimethyllysine; by EHMT2; alternate. At lysine 130 the chain carries N6,N6-dimethyllysine; by EHMT2; alternate. N6-methyllysine; by EHMT2; alternate is present on lysine 130. The span at 133–146 (SRSTHSTLSKTNSK) shows a compositional bias: polar residues. Serine 165, serine 196, and serine 211 each carry phosphoserine. The tract at residues 200-223 (GRTSVDGFQGESPEKLDPVDQGAE) is disordered. The interval 357-589 (SENNSLNPEV…DSMLKYLQRK (233 aa)) is acetyl-CoA-binding domain.

As to quaternary structure, forms multimers and multimerization is required for stable binding to chromatin. Interacts with HDAC1 and HDAC2 via its C-terminal acetyl-CoA-binding domain. Interacts with EZH2, EED, SUZ12, REST, EHMT1 and EHMT2. Part of a complex containing at least CDYL, REST, WIZ, SETB1, EHMT1 and EHMT2. Part of a complex containing at least CDYL, MIER1, MIER2, HDAC1 and HDAC2. Interacts with CHAF1A and CHAF1B; bridging the CAF-1 complex to the MCM2-7 (MCM) complex. Interacts with MCM3 and MCM5; bridging the CAF-1 complex to the MCM2-7 (MCM) complex. Interacts with EHMT2 and PRDM9; interaction only takes place when PRDM9 is bound to hotspot DNA. As to expression, highly expressed in testis (at protein level). Expressed in the hippocampus (at protein level). Expressed in the medial prefrontal cortex, prelimbic cortex, intralimbic cortex and cingulate cortex area (at protein level). Isoform 1: Expressed as 2 transcripts encoding the same protein, a ubiquitous transcript and a highly expressed testis-specific transcript.

The protein localises to the nucleus. It localises to the chromosome. The catalysed reaction is L-lysyl-[protein] + acetyl-CoA = N(6)-acetyl-L-lysyl-[protein] + CoA + H(+). It catalyses the reaction 3-hydroxybutanoyl-CoA = (2E)-butenoyl-CoA + H2O. Functionally, chromatin reader protein that recognizes and binds histone H3 trimethylated at 'Lys-9', dimethylated at 'Lys-27' and trimethylated at 'Lys-27' (H3K9me3, H3K27me2 and H3K27me3, respectively). Part of multimeric repressive chromatin complexes, where it is required for transmission and restoration of repressive histone marks, thereby preserving the epigenetic landscape. Required for chromatin targeting and maximal enzymatic activity of Polycomb repressive complex 2 (PRC2); acts as a positive regulator of PRC2 activity by bridging the pre-existing histone H3K27me3 and newly recruited PRC2 on neighboring nucleosomes. Acts as a corepressor for REST by facilitating histone-lysine N-methyltransferase EHMT2 recruitment and H3K9 dimethylation at REST target genes for repression. Involved in X chromosome inactivation in females: recruited to Xist RNA-coated X chromosome and facilitates propagation of H3K9me2 by anchoring EHMT2. Promotes EZH2 accumulation and H3K27me3 methylation at DNA double strand breaks (DSBs), thereby facilitating transcriptional repression at sites of DNA damage and homology-directed repair of DSBs. Required for neuronal migration during brain development by repressing expression of RHOA. By repressing the expression of SCN8A, contributes to the inhibition of intrinsic neuronal excitability and epileptogenesis. In addition to acting as a chromatin reader, acts as a hydro-lyase. Shows crotonyl-coA hydratase activity by mediating the conversion of crotonyl-CoA ((2E)-butenoyl-CoA) to beta-hydroxybutyryl-CoA (3-hydroxybutanoyl-CoA), thereby acting as a negative regulator of histone crotonylation. Histone crotonylation is required during spermatogenesis; down-regulation of histone crotonylation by CDYL regulates the reactivation of sex chromosome-linked genes in round spermatids and histone replacement in elongating spermatids. By regulating histone crotonylation and trimethylation of H3K27, may be involved in stress-induced depression-like behaviors, possibly by regulating VGF expression. May have histone acetyltransferase activity; such activity is however unsure in vivo. Its function is as follows. Not able to recognize and bind histone H3K9me3, histone H3K27me2 and histone H3K27me3, due to the presence of a N-terminal extension that inactivates the chromo domain. The chain is Chromodomain Y-like protein from Mus musculus (Mouse).